Consider the following 520-residue polypeptide: F-box/LRR-repeat protein At3g59200 (520 aa).

Positions 6–54 constitute an F-box domain; that stretch reads RDRISSLPNPVVSHILSFLPTKEAASTSVLSKKWRYLFAYVTNLDFDDS. LRR repeat units follow at residues 170–197, 219–244, and 340–365; these read CVDV…VLMN, FCEE…EYSD, and NSEI…VLKR.

This Arabidopsis thaliana (Mouse-ear cress) protein is F-box/LRR-repeat protein At3g59200.